The primary structure comprises 158 residues: S-ribosylhomocysteine lyase (158 aa).

Positions 54, 58, and 124 each coordinate Fe cation.

This sequence belongs to the LuxS family. As to quaternary structure, homodimer. The cofactor is Fe cation.

The enzyme catalyses S-(5-deoxy-D-ribos-5-yl)-L-homocysteine = (S)-4,5-dihydroxypentane-2,3-dione + L-homocysteine. Its function is as follows. Involved in the synthesis of autoinducer 2 (AI-2) which is secreted by bacteria and is used to communicate both the cell density and the metabolic potential of the environment. The regulation of gene expression in response to changes in cell density is called quorum sensing. Catalyzes the transformation of S-ribosylhomocysteine (RHC) to homocysteine (HC) and 4,5-dihydroxy-2,3-pentadione (DPD). The polypeptide is S-ribosylhomocysteine lyase (Lactobacillus gasseri (strain ATCC 33323 / DSM 20243 / BCRC 14619 / CIP 102991 / JCM 1131 / KCTC 3163 / NCIMB 11718 / NCTC 13722 / AM63)).